Here is a 421-residue protein sequence, read N- to C-terminus: Gamma-glutamyl phosphate reductase (421 aa).

Belongs to the gamma-glutamyl phosphate reductase family.

The protein resides in the cytoplasm. The enzyme catalyses L-glutamate 5-semialdehyde + phosphate + NADP(+) = L-glutamyl 5-phosphate + NADPH + H(+). The protein operates within amino-acid biosynthesis; L-proline biosynthesis; L-glutamate 5-semialdehyde from L-glutamate: step 2/2. In terms of biological role, catalyzes the NADPH-dependent reduction of L-glutamate 5-phosphate into L-glutamate 5-semialdehyde and phosphate. The product spontaneously undergoes cyclization to form 1-pyrroline-5-carboxylate. This Leifsonia xyli subsp. xyli (strain CTCB07) protein is Gamma-glutamyl phosphate reductase.